Reading from the N-terminus, the 208-residue chain is Large ribosomal subunit protein uL3 (208 aa).

Position 149 is an N5-methylglutamine (Gln-149).

The protein belongs to the universal ribosomal protein uL3 family. As to quaternary structure, part of the 50S ribosomal subunit. Forms a cluster with proteins L14 and L19. Post-translationally, methylated by PrmB.

Its function is as follows. One of the primary rRNA binding proteins, it binds directly near the 3'-end of the 23S rRNA, where it nucleates assembly of the 50S subunit. In Haemophilus ducreyi (strain 35000HP / ATCC 700724), this protein is Large ribosomal subunit protein uL3.